Here is a 311-residue protein sequence, read N- to C-terminus: Protein N-terminal asparagine amidohydrolase (311 aa).

In terms of assembly, monomer.

The protein resides in the cytoplasm. It carries out the reaction N-terminal L-asparaginyl-[protein] + H2O + H(+) = N-terminal L-aspartyl-[protein] + NH4(+). N-terminal asparagine deamidase that mediates deamidation of N-terminal asparagine residues to aspartate. Required for the ubiquitin-dependent turnover of intracellular proteins that initiate with Met-Asn. These proteins are acetylated on the retained initiator methionine and can subsequently be modified by the removal of N-acetyl methionine by acylaminoacid hydrolase (AAH). Conversion of the resulting N-terminal asparagine to aspartate by NTAN1/PNAD renders the protein susceptible to arginylation, polyubiquitination and degradation as specified by the N-end rule. This enzyme does not act on substrates with internal or C-terminal asparagines and does not act on glutamine residues in any position. The protein is Protein N-terminal asparagine amidohydrolase (NTAN1) of Sus scrofa (Pig).